The sequence spans 141 residues: Nucleoside diphosphate kinase (141 aa).

Residues Lys11, Phe59, Arg87, Thr93, Arg104, and Asn114 each coordinate ATP. Catalysis depends on His117, which acts as the Pros-phosphohistidine intermediate.

Belongs to the NDK family. Homotetramer. Mg(2+) serves as cofactor.

It localises to the cytoplasm. The catalysed reaction is a 2'-deoxyribonucleoside 5'-diphosphate + ATP = a 2'-deoxyribonucleoside 5'-triphosphate + ADP. The enzyme catalyses a ribonucleoside 5'-diphosphate + ATP = a ribonucleoside 5'-triphosphate + ADP. Functionally, major role in the synthesis of nucleoside triphosphates other than ATP. The ATP gamma phosphate is transferred to the NDP beta phosphate via a ping-pong mechanism, using a phosphorylated active-site intermediate. This chain is Nucleoside diphosphate kinase, found in Legionella pneumophila subsp. pneumophila (strain Philadelphia 1 / ATCC 33152 / DSM 7513).